The primary structure comprises 83 residues: Hainantoxin-III 6 (83 aa).

A signal peptide spans 1–21; it reads MKASMFLALAGLVLLFVVGYA. Positions 22-48 are excised as a propeptide; it reads SESEEKESPRELLSKIFAVDDFKGEER. 3 cysteine pairs are disulfide-bonded: Cys50-Cys65, Cys57-Cys70, and Cys64-Cys77. Position 81 is a leucine amide (Leu81).

It belongs to the neurotoxin 10 (Hwtx-1) family. 15 (Hntx-3) subfamily. In terms of assembly, monomer. Expressed by the venom gland.

The protein localises to the secreted. Selective antagonist of neuronal tetrodotoxin (TTX)-sensitive voltage-gated sodium channels (IC(50)=1270 nM on Nav1.1/SCN1A, 270 nM on Nav1.2/SCN2A, 491 nM on Nav1.3/SCN3A and 232 nM on Nav1.7/SCN9A). This toxin suppress Nav1.7 current amplitude without significantly altering the activation, inactivation, and repriming kinetics. Short extreme depolarizations partially activate the toxin-bound channel, indicating voltage-dependent inhibition of this toxin. This toxin increases the deactivation of the Nav1.7 current after extreme depolarizations. The toxin-Nav1.7 complex is gradually dissociated upon prolonged strong depolarizations in a voltage-dependent manner, and the unbound toxin rebinds to Nav1.7 after a long repolarization. Moreover, analysis of chimeric channels showed that the DIIS3-S4 linker is critical for toxin binding to Nav1.7. These data are consistent with this toxin interacting with Nav1.7 site 4 and trapping the domain II voltage sensor in the closed state. In Cyriopagopus hainanus (Chinese bird spider), this protein is Hainantoxin-III 6.